Here is a 183-residue protein sequence, read N- to C-terminus: Nascent polypeptide-associated complex subunit beta (183 aa).

The 66-residue stretch at 62–127 (GADDKKLQTT…GEEKELTELV (66 aa)) folds into the NAC-A/B domain. The disordered stretch occupies residues 150–183 (QNMQKQAGTEGKKDEDEDDIPDLVEGENFESNVE). Residues 164-183 (EDEDDIPDLVEGENFESNVE) are compositionally biased toward acidic residues.

Belongs to the NAC-beta family. Part of the nascent polypeptide-associated complex (NAC), consisting of egd2 and egd1. NAC associates with ribosomes via egd1.

The protein resides in the cytoplasm. It localises to the nucleus. Component of the nascent polypeptide-associated complex (NAC), a dynamic component of the ribosomal exit tunnel, protecting the emerging polypeptides from interaction with other cytoplasmic proteins to ensure appropriate nascent protein targeting. The NAC complex also promotes mitochondrial protein import by enhancing productive ribosome interactions with the outer mitochondrial membrane and blocks the inappropriate interaction of ribosomes translating non-secretory nascent polypeptides with translocation sites in the membrane of the endoplasmic reticulum. EGD1 may act as a transcription factor that exert a negative effect on the expression of several genes that are transcribed by RNA polymerase II. This Neosartorya fischeri (strain ATCC 1020 / DSM 3700 / CBS 544.65 / FGSC A1164 / JCM 1740 / NRRL 181 / WB 181) (Aspergillus fischerianus) protein is Nascent polypeptide-associated complex subunit beta (egd1).